Here is a 224-residue protein sequence, read N- to C-terminus: Phosphoribosyltransferase domain-containing protein 1 (224 aa).

The Mg(2+) site is built by E140 and D141. GMP contacts are provided by residues 140–148 (EDIINTGRT), K172, 193–194 (FV), and D200. Mg(2+) is bound at residue D200.

The protein belongs to the purine/pyrimidine phosphoribosyltransferase family.

This is Phosphoribosyltransferase domain-containing protein 1 (prtfdc1) from Xenopus tropicalis (Western clawed frog).